Here is a 479-residue protein sequence, read N- to C-terminus: 6-phosphogluconate dehydrogenase, decarboxylating (479 aa).

Residues Gly9 to Gly14, Asn32 to Thr34, Ile74 to Ala76, and Asn102 each bind NADP(+). Substrate-binding positions include Asn102 and Ser128–Gly130. The active-site Proton acceptor is Lys182. His185–Asn186 serves as a coordination point for substrate. Glu189 serves as the catalytic Proton donor. Substrate-binding residues include Tyr190, Lys259, Arg286, Arg446, and His452.

The protein belongs to the 6-phosphogluconate dehydrogenase family. As to quaternary structure, homodimer.

It carries out the reaction 6-phospho-D-gluconate + NADP(+) = D-ribulose 5-phosphate + CO2 + NADPH. It functions in the pathway carbohydrate degradation; pentose phosphate pathway; D-ribulose 5-phosphate from D-glucose 6-phosphate (oxidative stage): step 3/3. In terms of biological role, catalyzes the oxidative decarboxylation of 6-phosphogluconate to ribulose 5-phosphate and CO(2), with concomitant reduction of NADP to NADPH. The protein is 6-phosphogluconate dehydrogenase, decarboxylating (gnd) of Chlamydia pneumoniae (Chlamydophila pneumoniae).